A 465-amino-acid polypeptide reads, in one-letter code: Ribulose bisphosphate carboxylase large chain (465 aa).

Lysine 4 bears the N6,N6,N6-trimethyllysine mark. Substrate contacts are provided by asparagine 113 and threonine 163. Catalysis depends on lysine 165, which acts as the Proton acceptor. Lysine 167 is a binding site for substrate. Residues lysine 191, aspartate 193, and glutamate 194 each contribute to the Mg(2+) site. An N6-carboxylysine modification is found at lysine 191. Histidine 284 functions as the Proton acceptor in the catalytic mechanism. 3 residues coordinate substrate: arginine 285, histidine 317, and serine 369.

Belongs to the RuBisCO large chain family. Type I subfamily. In terms of assembly, heterohexadecamer of 8 large chains and 8 small chains; disulfide-linked. The disulfide link is formed within the large subunit homodimers. Mg(2+) is required as a cofactor. The disulfide bond which can form in the large chain dimeric partners within the hexadecamer appears to be associated with oxidative stress and protein turnover.

It is found in the plastid. The protein resides in the chloroplast. It catalyses the reaction 2 (2R)-3-phosphoglycerate + 2 H(+) = D-ribulose 1,5-bisphosphate + CO2 + H2O. The enzyme catalyses D-ribulose 1,5-bisphosphate + O2 = 2-phosphoglycolate + (2R)-3-phosphoglycerate + 2 H(+). In terms of biological role, ruBisCO catalyzes two reactions: the carboxylation of D-ribulose 1,5-bisphosphate, the primary event in carbon dioxide fixation, as well as the oxidative fragmentation of the pentose substrate in the photorespiration process. Both reactions occur simultaneously and in competition at the same active site. In Passiflora quadrangularis (Grenadine), this protein is Ribulose bisphosphate carboxylase large chain.